The following is a 297-amino-acid chain: 4-hydroxy-tetrahydrodipicolinate synthase (297 aa).

Residue Thr-47 coordinates pyruvate. Residue Tyr-135 is the Proton donor/acceptor of the active site. Lys-163 serves as the catalytic Schiff-base intermediate with substrate. Ile-205 serves as a coordination point for pyruvate.

The protein belongs to the DapA family. In terms of assembly, homotetramer; dimer of dimers.

The protein resides in the cytoplasm. It catalyses the reaction L-aspartate 4-semialdehyde + pyruvate = (2S,4S)-4-hydroxy-2,3,4,5-tetrahydrodipicolinate + H2O + H(+). Its pathway is amino-acid biosynthesis; L-lysine biosynthesis via DAP pathway; (S)-tetrahydrodipicolinate from L-aspartate: step 3/4. Functionally, catalyzes the condensation of (S)-aspartate-beta-semialdehyde [(S)-ASA] and pyruvate to 4-hydroxy-tetrahydrodipicolinate (HTPA). This is 4-hydroxy-tetrahydrodipicolinate synthase from Dehalococcoides mccartyi (strain ATCC BAA-2266 / KCTC 15142 / 195) (Dehalococcoides ethenogenes (strain 195)).